Reading from the N-terminus, the 468-residue chain is Ubiquitin carboxyl-terminal hydrolase MINDY-1 (468 aa).

Positions 1 to 19 are enriched in polar residues; that stretch reads MEQPQTENPAPSKATSAET. Residues 1-105 form a disordered region; that stretch reads MEQPQTENPA…RPQELPQSPR (105 aa). Basic and acidic residues predominate over residues 22–41; sequence SENHEALSGPEKHPQDKDGA. Positions 43–54 are enriched in low complexity; sequence ADGAAGEQEPGD. Over residues 68–80 the composition is skewed to pro residues; it reads CPPPEASSSPPGP. S103 bears the Phosphoserine mark. C137 serves as the catalytic Nucleophile. The Proton acceptor role is filled by H319. The segment at 388–427 is ubiquitin-binding domain (UBD); that stretch reads QVDQDYLIALSLQQQQQPQGTLGLSDLELAQQLQQEEYQQ. Positions 423-432 are enriched in low complexity; the sequence is EEYQQQQAVQ. The disordered stretch occupies residues 423–468; sequence EEYQQQQAVQPVRTRAPSPQGRGATSGRPAGERRQRSKTESDCVLL. At S440 the chain carries Phosphoserine. Residues 452–468 are compositionally biased toward basic and acidic residues; it reads AGERRQRSKTESDCVLL.

The protein belongs to the MINDY deubiquitinase family. FAM63 subfamily.

It catalyses the reaction Thiol-dependent hydrolysis of ester, thioester, amide, peptide and isopeptide bonds formed by the C-terminal Gly of ubiquitin (a 76-residue protein attached to proteins as an intracellular targeting signal).. In terms of biological role, hydrolase that can specifically remove 'Lys-48'-linked conjugated ubiquitin from proteins. Has exodeubiquitinase activity and has a preference for long polyubiquitin chains. May play a regulatory role at the level of protein turnover. This chain is Ubiquitin carboxyl-terminal hydrolase MINDY-1 (Mindy1), found in Mus musculus (Mouse).